The primary structure comprises 196 residues: ATP-dependent Clp protease proteolytic subunit (196 aa).

The active-site Nucleophile is the S98. H123 is a catalytic residue.

Belongs to the peptidase S14 family. As to quaternary structure, fourteen ClpP subunits assemble into 2 heptameric rings which stack back to back to give a disk-like structure with a central cavity, resembling the structure of eukaryotic proteasomes.

Its subcellular location is the cytoplasm. It catalyses the reaction Hydrolysis of proteins to small peptides in the presence of ATP and magnesium. alpha-casein is the usual test substrate. In the absence of ATP, only oligopeptides shorter than five residues are hydrolyzed (such as succinyl-Leu-Tyr-|-NHMec, and Leu-Tyr-Leu-|-Tyr-Trp, in which cleavage of the -Tyr-|-Leu- and -Tyr-|-Trp bonds also occurs).. Cleaves peptides in various proteins in a process that requires ATP hydrolysis. Has a chymotrypsin-like activity. Plays a major role in the degradation of misfolded proteins. The polypeptide is ATP-dependent Clp protease proteolytic subunit (Geobacillus thermodenitrificans (strain NG80-2)).